Consider the following 245-residue polypeptide: Adenosylcobinamide-GDP ribazoletransferase (245 aa).

Helical transmembrane passes span 31-51 (FGRA…VLYG), 61-81 (PLLQ…ALHL), 113-133 (AAVV…AALL), 138-158 (PGLL…LFLT), and 192-212 (LAFG…FAWL).

Belongs to the CobS family. It depends on Mg(2+) as a cofactor.

The protein resides in the cell inner membrane. It carries out the reaction alpha-ribazole + adenosylcob(III)inamide-GDP = adenosylcob(III)alamin + GMP + H(+). It catalyses the reaction alpha-ribazole 5'-phosphate + adenosylcob(III)inamide-GDP = adenosylcob(III)alamin 5'-phosphate + GMP + H(+). Its pathway is cofactor biosynthesis; adenosylcobalamin biosynthesis; adenosylcobalamin from cob(II)yrinate a,c-diamide: step 7/7. Its function is as follows. Joins adenosylcobinamide-GDP and alpha-ribazole to generate adenosylcobalamin (Ado-cobalamin). Also synthesizes adenosylcobalamin 5'-phosphate from adenosylcobinamide-GDP and alpha-ribazole 5'-phosphate. This Pseudomonas paraeruginosa (strain DSM 24068 / PA7) (Pseudomonas aeruginosa (strain PA7)) protein is Adenosylcobinamide-GDP ribazoletransferase.